The sequence spans 237 residues: Leucyl/phenylalanyl-tRNA--protein transferase (237 aa).

This sequence belongs to the L/F-transferase family.

The protein localises to the cytoplasm. It catalyses the reaction N-terminal L-lysyl-[protein] + L-leucyl-tRNA(Leu) = N-terminal L-leucyl-L-lysyl-[protein] + tRNA(Leu) + H(+). The catalysed reaction is N-terminal L-arginyl-[protein] + L-leucyl-tRNA(Leu) = N-terminal L-leucyl-L-arginyl-[protein] + tRNA(Leu) + H(+). The enzyme catalyses L-phenylalanyl-tRNA(Phe) + an N-terminal L-alpha-aminoacyl-[protein] = an N-terminal L-phenylalanyl-L-alpha-aminoacyl-[protein] + tRNA(Phe). Functions in the N-end rule pathway of protein degradation where it conjugates Leu, Phe and, less efficiently, Met from aminoacyl-tRNAs to the N-termini of proteins containing an N-terminal arginine or lysine. This is Leucyl/phenylalanyl-tRNA--protein transferase from Photobacterium profundum (strain SS9).